Consider the following 34-residue polypeptide: Photosystem II reaction center protein M (34 aa).

Residues 5–25 (ILAVIATALFVLIPTAFLLIL) traverse the membrane as a helical segment.

The protein belongs to the PsbM family. PSII is composed of 1 copy each of membrane proteins PsbA, PsbB, PsbC, PsbD, PsbE, PsbF, PsbH, PsbI, PsbJ, PsbK, PsbL, PsbM, PsbT, PsbX, PsbY, PsbZ, Psb30/Ycf12, at least 3 peripheral proteins of the oxygen-evolving complex and a large number of cofactors. It forms dimeric complexes.

It is found in the plastid. It localises to the chloroplast thylakoid membrane. In terms of biological role, one of the components of the core complex of photosystem II (PSII). PSII is a light-driven water:plastoquinone oxidoreductase that uses light energy to abstract electrons from H(2)O, generating O(2) and a proton gradient subsequently used for ATP formation. It consists of a core antenna complex that captures photons, and an electron transfer chain that converts photonic excitation into a charge separation. This subunit is found at the monomer-monomer interface. The chain is Photosystem II reaction center protein M from Chaetosphaeridium globosum (Charophycean green alga).